The sequence spans 556 residues: Dihydroxy-acid dehydratase (556 aa).

Residue D78 coordinates Mg(2+). Residue C119 coordinates [2Fe-2S] cluster. 2 residues coordinate Mg(2+): D120 and K121. Position 121 is an N6-carboxylysine (K121). C195 serves as a coordination point for [2Fe-2S] cluster. E446 contacts Mg(2+). S472 functions as the Proton acceptor in the catalytic mechanism.

It belongs to the IlvD/Edd family. Homodimer. [2Fe-2S] cluster is required as a cofactor. Mg(2+) serves as cofactor.

It carries out the reaction (2R)-2,3-dihydroxy-3-methylbutanoate = 3-methyl-2-oxobutanoate + H2O. The enzyme catalyses (2R,3R)-2,3-dihydroxy-3-methylpentanoate = (S)-3-methyl-2-oxopentanoate + H2O. The protein operates within amino-acid biosynthesis; L-isoleucine biosynthesis; L-isoleucine from 2-oxobutanoate: step 3/4. Its pathway is amino-acid biosynthesis; L-valine biosynthesis; L-valine from pyruvate: step 3/4. Functions in the biosynthesis of branched-chain amino acids. Catalyzes the dehydration of (2R,3R)-2,3-dihydroxy-3-methylpentanoate (2,3-dihydroxy-3-methylvalerate) into 2-oxo-3-methylpentanoate (2-oxo-3-methylvalerate) and of (2R)-2,3-dihydroxy-3-methylbutanoate (2,3-dihydroxyisovalerate) into 2-oxo-3-methylbutanoate (2-oxoisovalerate), the penultimate precursor to L-isoleucine and L-valine, respectively. The chain is Dihydroxy-acid dehydratase from Desulfatibacillum aliphaticivorans.